A 62-amino-acid polypeptide reads, in one-letter code: Photosystem II reaction center protein Z (62 aa).

2 helical membrane-spanning segments follow: residues 8–28 (AVFALIATSLILVIGVPVVFA) and 41–61 (FSGTSLWIGLVFLVGILNSLI).

The protein belongs to the PsbZ family. PSII is composed of 1 copy each of membrane proteins PsbA, PsbB, PsbC, PsbD, PsbE, PsbF, PsbH, PsbI, PsbJ, PsbK, PsbL, PsbM, PsbT, PsbY, PsbZ, Psb30/Ycf12, at least 3 peripheral proteins of the oxygen-evolving complex and a large number of cofactors. It forms dimeric complexes.

Its subcellular location is the plastid. It localises to the chloroplast thylakoid membrane. Functionally, may control the interaction of photosystem II (PSII) cores with the light-harvesting antenna, regulates electron flow through the 2 photosystem reaction centers. PSII is a light-driven water plastoquinone oxidoreductase, using light energy to abstract electrons from H(2)O, generating a proton gradient subsequently used for ATP formation. The sequence is that of Photosystem II reaction center protein Z from Piper cenocladum (Ant piper).